Consider the following 218-residue polypeptide: LHFPL tetraspan subfamily member 3 protein (218 aa).

The next 4 helical transmembrane spans lie at 22–42 (IGVL…VCFI), 96–116 (FFIG…GLFF), 126–146 (ICAW…MIFP), and 177–197 (ILAI…FVLG).

It belongs to the LHFP family.

It localises to the membrane. The polypeptide is LHFPL tetraspan subfamily member 3 protein (Xenopus laevis (African clawed frog)).